A 426-amino-acid chain; its full sequence is Methionine aminopeptidase 2 (426 aa).

Positions 1–72 are disordered; it reads MTSATTTEAT…QEQTNPPTVG (72 aa). Over residues 10–34 the composition is skewed to basic and acidic residues; that stretch reads TAKDLQEKLSLKENDVVEDDGKVEE. Over residues 47–60 the composition is skewed to basic residues; sequence KKKKKKKKSSKKKK. Residue His-179 coordinates substrate. A divalent metal cation contacts are provided by Asp-199, Asp-210, and His-279. Position 287 (His-287) interacts with substrate. A divalent metal cation-binding residues include Glu-312 and Glu-407.

It belongs to the peptidase M24A family. Methionine aminopeptidase eukaryotic type 2 subfamily. It depends on Co(2+) as a cofactor. Zn(2+) serves as cofactor. The cofactor is Mn(2+). Fe(2+) is required as a cofactor.

The protein resides in the cytoplasm. It carries out the reaction Release of N-terminal amino acids, preferentially methionine, from peptides and arylamides.. Functionally, cotranslationally removes the N-terminal methionine from nascent proteins. The N-terminal methionine is often cleaved when the second residue in the primary sequence is small and uncharged (Met-Ala-, Cys, Gly, Pro, Ser, Thr, or Val). The polypeptide is Methionine aminopeptidase 2 (fma2) (Schizosaccharomyces pombe (strain 972 / ATCC 24843) (Fission yeast)).